The primary structure comprises 195 residues: Rac-like GTP-binding protein ARAC4 (195 aa).

Residues 12-19 (GDGAVGKT), 30-37 (FPTDYVPT), 59-63 (DTAGQ), and 117-120 (TKLD) contribute to the GTP site. An Effector region motif is present at residues 34-42 (YVPTVFDNF). C192 is modified (cysteine methyl ester). C192 is lipidated: S-geranylgeranyl cysteine. The propeptide at 193 to 195 (AFL) is removed in mature form.

Belongs to the small GTPase superfamily. Rho family. As to quaternary structure, interacts with SPK1, ICR1, ICR5 and PIR. Ubiquitous.

It is found in the cytoplasm. The protein resides in the cell membrane. Inactive GDP-bound Rho GTPases reside in the cytosol, are found in a complex with Rho GDP-dissociation inhibitors (Rho GDIs), and are released from the GDI protein in order to translocate to membranes upon activation. Involved in cell polarity control during the actin-dependent tip growth of root hairs, thus regulating root hair length and root hair initiation. Contributes, in a SPK1-dependent manner, to the prevention of cortical microtubules organization into parallel arrays oriented perpendicular to the axis of cell elongation to limit anisotropic cell growth during petal development. May regulate a WAVE complex that activates the Arp2/3 complex. The chain is Rac-like GTP-binding protein ARAC4 from Arabidopsis thaliana (Mouse-ear cress).